The following is a 317-amino-acid chain: Acetyl-coenzyme A carboxylase carboxyl transferase subunit alpha (317 aa).

Positions 37 to 292 constitute a CoA carboxyltransferase C-terminal domain; the sequence is QISQKLEDTK…EEYILKAFNE (256 aa).

It belongs to the AccA family. As to quaternary structure, acetyl-CoA carboxylase is a heterohexamer composed of biotin carboxyl carrier protein (AccB), biotin carboxylase (AccC) and two subunits each of ACCase subunit alpha (AccA) and ACCase subunit beta (AccD).

The protein resides in the cytoplasm. The enzyme catalyses N(6)-carboxybiotinyl-L-lysyl-[protein] + acetyl-CoA = N(6)-biotinyl-L-lysyl-[protein] + malonyl-CoA. It participates in lipid metabolism; malonyl-CoA biosynthesis; malonyl-CoA from acetyl-CoA: step 1/1. Its function is as follows. Component of the acetyl coenzyme A carboxylase (ACC) complex. First, biotin carboxylase catalyzes the carboxylation of biotin on its carrier protein (BCCP) and then the CO(2) group is transferred by the carboxyltransferase to acetyl-CoA to form malonyl-CoA. This chain is Acetyl-coenzyme A carboxylase carboxyl transferase subunit alpha, found in Flavobacterium psychrophilum (strain ATCC 49511 / DSM 21280 / CIP 103535 / JIP02/86).